Here is a 297-residue protein sequence, read N- to C-terminus: Alarmin release inhibitor (297 aa).

3 N-linked (GlcNAc...) asparagine glycosylation sites follow: N107, N175, and N190. In terms of domain architecture, Sushi spans 151-211; that stretch reads TYDPTPNTPT…WVPTLGVCPK (61 aa). The cysteines at positions 183 and 209 are disulfide-linked.

As to quaternary structure, interacts with mouse IL33 (in reduced form).

It localises to the secreted. It is found in the host nucleus. Secreted protein which suppresses the host allergic response by inhibiting the interaction of host IL33 with its receptor in order to maintain parasitic infection. Binds to both host IL33 and host nuclear DNA and this dual binding blocks the interaction of IL33 with its receptor, and tethers IL33 within necrotic cells, preventing its release, and blocking allergic response initiation. This Heligmosomoides polygyrus (Parasitic roundworm) protein is Alarmin release inhibitor.